A 286-amino-acid chain; its full sequence is Beta-lactamase SHV-3 (286 aa).

The N-terminal stretch at 1-21 (MRYIRLCIISLLATLPLAVHA) is a signal peptide. S66 serves as the catalytic Acyl-ester intermediate. An intrachain disulfide couples C73 to C119. The active-site Proton acceptor is E164. Residue 230–232 (KTG) coordinates substrate.

It belongs to the class-A beta-lactamase family.

The enzyme catalyses a beta-lactam + H2O = a substituted beta-amino acid. Functionally, this enzyme hydrolyzes cefotaxime, ceftazidime and other broad spectrum cephalosporins. The protein is Beta-lactamase SHV-3 (bla) of Klebsiella pneumoniae.